A 511-amino-acid polypeptide reads, in one-letter code: 2,3-bisphosphoglycerate-independent phosphoglycerate mutase (511 aa).

2 residues coordinate Mn(2+): D12 and S62. S62 serves as the catalytic Phosphoserine intermediate. Substrate-binding positions include H123, 153-154 (RD), R185, R191, 260-263 (RPDR), and K335. The Mn(2+) site is built by D402, H406, D443, H444, and H462.

The protein belongs to the BPG-independent phosphoglycerate mutase family. Monomer. The cofactor is Mn(2+).

It carries out the reaction (2R)-2-phosphoglycerate = (2R)-3-phosphoglycerate. It functions in the pathway carbohydrate degradation; glycolysis; pyruvate from D-glyceraldehyde 3-phosphate: step 3/5. In terms of biological role, catalyzes the interconversion of 2-phosphoglycerate and 3-phosphoglycerate. The chain is 2,3-bisphosphoglycerate-independent phosphoglycerate mutase from Acetivibrio thermocellus (strain ATCC 27405 / DSM 1237 / JCM 9322 / NBRC 103400 / NCIMB 10682 / NRRL B-4536 / VPI 7372) (Clostridium thermocellum).